Reading from the N-terminus, the 290-residue chain is HTH-type transcriptional activator RhaR (290 aa).

Residues 179–277 form the HTH araC/xylS-type domain; that stretch reads DLIMSALQQS…GMTPRDYRQR (99 aa). 2 DNA-binding regions (H-T-H motif) span residues 196–217 and 244–267; these read ADFCHKNQLVERSLKQLFRQQT and ISDIAARCGFEDSNYFSAVFTREA.

As to quaternary structure, binds DNA as a dimer.

It localises to the cytoplasm. In terms of biological role, activates expression of the rhaSR operon in response to L-rhamnose. This Yersinia pseudotuberculosis serotype O:1b (strain IP 31758) protein is HTH-type transcriptional activator RhaR.